Reading from the N-terminus, the 59-residue chain is MAKAKKKGATLFKVVSTEGTGFFYLVCRNLKNKQEKYSFRKYDPVVRKHVLFKEAKLNK.

It belongs to the bacterial ribosomal protein bL33 family.

The sequence is that of Large ribosomal subunit protein bL33 from Neorickettsia sennetsu (strain ATCC VR-367 / Miyayama) (Ehrlichia sennetsu).